Here is a 752-residue protein sequence, read N- to C-terminus: Double zinc ribbon and ankyrin repeat-containing protein 1 (752 aa).

2 positions are modified to phosphoserine: serine 160 and serine 182. The tract at residues 164-187 (IPAYGGGSGSRPPTRQSQSPGFAH) is disordered. A compositionally biased stretch (polar residues) spans 174–183 (RPPTRQSQSP). 2 DZANK-type zinc fingers span residues 211-270 (CAHC…CVVC) and 339-387 (CYRC…GSCG). ANK repeat units lie at residues 605-636 (ENRLLLKEVGPTGEGRVSVIEQLLDEGADPNC) and 640-669 (DNRPVITVAVMNKHHEAIPVLVQRGADIDQ).

In terms of assembly, interacts with NINL isoform 2. Associates with DYNC1H1 and multiple dynein intermediate and light chains as well as actin-binding proteins.

The protein resides in the cytoplasm. It is found in the cytoskeleton. It localises to the microtubule organizing center. The protein localises to the centrosome. Its subcellular location is the cilium basal body. Its function is as follows. Involved in vesicle transport in photoreceptor cells. This chain is Double zinc ribbon and ankyrin repeat-containing protein 1, found in Homo sapiens (Human).